Consider the following 474-residue polypeptide: L-arabinose isomerase (474 aa).

Residues glutamate 306, glutamate 331, histidine 348, and histidine 447 each contribute to the Mn(2+) site.

This sequence belongs to the arabinose isomerase family. Mn(2+) is required as a cofactor.

The catalysed reaction is beta-L-arabinopyranose = L-ribulose. It functions in the pathway carbohydrate degradation; L-arabinose degradation via L-ribulose; D-xylulose 5-phosphate from L-arabinose (bacterial route): step 1/3. Functionally, catalyzes the conversion of L-arabinose to L-ribulose. The sequence is that of L-arabinose isomerase from Levilactobacillus brevis (strain ATCC 367 / BCRC 12310 / CIP 105137 / JCM 1170 / LMG 11437 / NCIMB 947 / NCTC 947) (Lactobacillus brevis).